Here is a 334-residue protein sequence, read N- to C-terminus: S-adenosylmethionine decarboxylase proenzyme (334 aa).

Phe7 contacts substrate. Residues Glu8 and Glu11 contribute to the active site. Glu67 contributes to the substrate binding site. The active-site Schiff-base intermediate with substrate; via pyruvic acid is Ser68. Ser68 is subject to Pyruvic acid (Ser); by autocatalysis. Cys82 serves as the catalytic Proton donor; for catalytic activity. Phe223 provides a ligand contact to substrate. Active-site proton acceptor; for processing activity residues include Ser229 and His243. Glu247 is a binding site for substrate. Ser298 bears the Phosphoserine mark.

It belongs to the eukaryotic AdoMetDC family. As to quaternary structure, heterotetramer of two alpha and two beta chains. It depends on pyruvate as a cofactor. Post-translationally, is synthesized initially as an inactive proenzyme. Formation of the active enzyme involves a self-maturation process in which the active site pyruvoyl group is generated from an internal serine residue via an autocatalytic post-translational modification. Two non-identical subunits are generated from the proenzyme in this reaction, and the pyruvate is formed at the N-terminus of the alpha chain, which is derived from the carboxyl end of the proenzyme. The post-translation cleavage follows an unusual pathway, termed non-hydrolytic serinolysis, in which the side chain hydroxyl group of the serine supplies its oxygen atom to form the C-terminus of the beta chain, while the remainder of the serine residue undergoes an oxidative deamination to produce ammonia and the pyruvoyl group blocking the N-terminus of the alpha chain.

The catalysed reaction is S-adenosyl-L-methionine + H(+) = S-adenosyl 3-(methylsulfanyl)propylamine + CO2. It functions in the pathway amine and polyamine biosynthesis; S-adenosylmethioninamine biosynthesis; S-adenosylmethioninamine from S-adenosyl-L-methionine: step 1/1. Functionally, essential for biosynthesis of the polyamines spermidine and spermine. Promotes maintenance and self-renewal of embryonic stem cells, by maintaining spermine levels. This Bos taurus (Bovine) protein is S-adenosylmethionine decarboxylase proenzyme (AMD1).